The sequence spans 251 residues: Prolactin-7B1 (251 aa).

The first 29 residues, 1-29 (MHLSLTQQCLWPLQILLVSNLLLWENVAA), serve as a signal peptide directing secretion. Asparagine 73 is a glycosylation site (N-linked (GlcNAc...) asparagine). 2 cysteine pairs are disulfide-bonded: cysteine 100–cysteine 216 and cysteine 233–cysteine 241.

It belongs to the somatotropin/prolactin family.

It is found in the secreted. The chain is Prolactin-7B1 (Prl7b1) from Rattus norvegicus (Rat).